Reading from the N-terminus, the 89-residue chain is LSM complex subunit LSM3 (89 aa).

The Sm domain maps to 3-82 (TPLDLLKLNL…VTLISTPSED (80 aa)).

The protein belongs to the snRNP Sm proteins family. Component of the heptameric LSM1-LSM7 complex that forms a seven-membered ring structure with a donut shape. The LSm subunits are arranged in the order LSM1, LSM2, LSM3, LSM6, LSM5, LSM7 and LSM4. Except for LSM1, where a C-terminal helix crosses the ring structure to form additional interactions with LSM3 and LSM6, each subunit interacts only with its two neighboring subunits. The LSM1-LSM7 complex interacts with PAT1; within the complex PAT1 has direct interactions with LSM2 and LSM3. The LSM1-LSM7 complex interacts with XRN1. Component of the heptameric LSM2-LSM8 complex that forms a seven-membered ring structure with a donut shape; an RNA strand can pass through the hole in the center of the ring structure. The LSm subunits are arranged in the order LSM8, LSM2, LSM3, LSM6, LSM5, LSM7 and LSM4. Component of the spliceosome U4/U6-U5 tri-snRNP complex composed of the U4, U6 and U5 snRNAs and at least PRP3, PRP4, PRP6, PRP8, PRP18, PRP31, PRP38, SNU13, SNU23, SNU66, SNU114, SPP381, SMB1, SMD1, SMD2, SMD3, SMX2, SMX3, LSM2, LSM3, LSM4, LSM5, LSM6, LSM7, LSM8, BRR2 and DIB1. May be found in a complex comprising LSM2-LSM7 without LSM1 or LSM8; the complex associates with pre-P RNA and snoRNA SNR5.

It localises to the nucleus. The protein resides in the nucleolus. Its subcellular location is the cytoplasm. Functionally, component of LSm protein complexes, which are involved in RNA processing and may function in a chaperone-like manner. Component of the cytoplasmic LSM1-LSM7 complex which is involved in mRNA degradation by activating the decapping step. Together with PAT1, the LSM1-LSM7 complex binds to osmotic stress-activated mRNAs to attenuate the osmotic stress response, probably by limiting ribosome access to the mRNA and consequently translation. Component of the nuclear LSM2-LSM8 complex, which is involved in spliceosome assembly. The LSM2-LSM8 complex plays a role in the biogenesis of the spliceosomal U4/U6-U5 tri-snRNP complex by accelerating PRP24-mediated annealing of U4/U6 di-snRNA. The LSM2-LSM8 complex binds U6 snRNA terminating with a non-cyclic 3' phosphate group. LSM2-LSM8 is probably also involved in degradation of nuclear pre-mRNA by targeting them for decapping. LSM2-LSM8 could be involved in processing of pre-tRNAs, pre-rRNAs and U3 snoRNA, although involvement may be indirect. In a complex that probably contains LSM2-LSM7, but not LSM1 or LSM8, associates with the precursor of the RNA component of RNase P (pre-P RNA) and may be involved in maturing pre-P RNA; the complex also associates with snoRNA SNR5. This is LSM complex subunit LSM3 (LSM3) from Saccharomyces cerevisiae (strain ATCC 204508 / S288c) (Baker's yeast).